Consider the following 319-residue polypeptide: Mercury resistance probable Hg transport protein (319 aa).

The Hg(2+) site is built by Cys-298, Cys-299, Cys-318, and Cys-319.

The chain is Mercury resistance probable Hg transport protein from Streptomyces lividans.